A 129-amino-acid polypeptide reads, in one-letter code: Translation initiation factor 5A (129 aa).

Hypusine is present on lysine 36.

It belongs to the eIF-5A family.

The protein localises to the cytoplasm. Functionally, functions by promoting the formation of the first peptide bond. The protein is Translation initiation factor 5A of Picrophilus torridus (strain ATCC 700027 / DSM 9790 / JCM 10055 / NBRC 100828 / KAW 2/3).